Here is a 260-residue protein sequence, read N- to C-terminus: Archaerhodopsin-1 (260 aa).

The propeptide occupies 1–6; that stretch reads MDPIAL. Residues 7–20 lie on the Extracellular side of the membrane; the sequence is TAAVGADLLGDGRP. The helical transmembrane segment at 21-42 threads the bilayer; the sequence is ETLWLGIGTLLMLIGTFYFIVK. At 43 to 51 the chain is on the cytoplasmic side; it reads GWGVTDKEA. Residues 52 to 73 traverse the membrane as a helical segment; that stretch reads REYYSITILVPGIASAAYLSMF. Residues 74 to 91 are Extracellular-facing; the sequence is FGIGLTEVQVGSEMLDIY. Residues 92-113 traverse the membrane as a helical segment; sequence YARYADWLFTTPLLLLDLALLA. Residues 114–116 are Cytoplasmic-facing; it reads KVD. Residues 117 to 139 form a helical membrane-spanning segment; sequence RVSIGTLVGVDALMIVTGLVGAL. At 140 to 143 the chain is on the extracellular side; it reads SHTP. The chain crosses the membrane as a helical span at residues 144–172; sequence LARYTWWLFSTICMIVVLYFLATSLRAAA. The Cytoplasmic portion of the chain corresponds to 173–176; it reads KERG. The helical transmembrane segment at 177–204 threads the bilayer; that stretch reads PEVASTFNTLTALVLVLWTAYPILWIIG. Topologically, residues 205–212 are extracellular; sequence TEGAGVVG. A helical membrane pass occupies residues 213–245; it reads LGIETLLFMVLDVTAKVGFGFILLRSRAILGDT. Lys228 carries the N6-(retinylidene)lysine modification. The Cytoplasmic portion of the chain corresponds to 246–260; it reads EAPEPSAGAEASAAD.

The protein belongs to the archaeal/bacterial/fungal opsin family.

The protein resides in the cell membrane. Light-driven proton pump. It may interact with bacterioruberin in the claret membrane. The polypeptide is Archaerhodopsin-1 (Halorubrum ezzemoulense (Halorubrum chaoviator)).